The sequence spans 152 residues: Interleukin-1 family member 10 (152 aa).

This sequence belongs to the IL-1 family. In terms of assembly, interacts with cargo receptor TMED10; the interaction mediates the translocation from the cytoplasm into the ERGIC (endoplasmic reticulum-Golgi intermediate compartment) and thereby secretion.

Its subcellular location is the cytoplasm. The protein resides in the endoplasmic reticulum-Golgi intermediate compartment. The protein localises to the secreted. Cytokine with immunomodulatory activity. Alone, does not induce cytokine production, but reduces IL22 and IL17A production by T-cells in response to heat-killed Candida albicans. Reduces IL36G-induced production of IL8 by peripheral blood mononuclear cells. Increases IL6 production by dendritic cells stimulated by bacterial lipopolysaccharides (LPS). Ligand for IL-36R/IL1RL2. The chain is Interleukin-1 family member 10 (Il1f10) from Mus musculus (Mouse).